The chain runs to 55 residues: Large ribosomal subunit protein bL33 (55 aa).

Basic and acidic residues predominate over residues 1–11 (MAKSGRDKIKL). The segment at 1–28 (MAKSGRDKIKLESTAGTGHFYTTTKNKR) is disordered. Residues 14-24 (TAGTGHFYTTT) show a composition bias toward polar residues.

The protein belongs to the bacterial ribosomal protein bL33 family.

The chain is Large ribosomal subunit protein bL33 from Janthinobacterium sp. (strain Marseille) (Minibacterium massiliensis).